Consider the following 335-residue polypeptide: MKFNTIFLVLSIVKFILISAQSCPFSQSIINGASATFYTAIDAGNCGFEKLNGPLGPGNYMIAALGSKLYQNGAQCGQCFKISNSKNASVTVMATDSCHDAGYCQRDNHFDLSPAAFSILGPQSQGVLDGLSYVKVPCEVSGNVKIMMKDGSNDFWTSFFVFNSKVIIKQVSIKLSNSNQFVPLSQTTYNYWPTSITGGQFHVRIESIGGEFIYVTIPKVESRKVYETSGQFSTSCSNLNENNPINYKPQTFNSQQTSNNQNSNTQTPTKQPSPNSQNFIPSYCQQYIQKPNYIFAKESKEMLVLNENENIESNSLKLLPNFLLLILIILLNINF.

The N-terminal stretch at 1-20 is a signal peptide; sequence MKFNTIFLVLSIVKFILISA. At 21–314 the chain is on the extracellular side; sequence QSCPFSQSII…LNENENIESN (294 aa). Residues 43 to 143 enclose the Expansin-like EG45 domain; that stretch reads AGNCGFEKLN…VKVPCEVSGN (101 aa). Intrachain disulfides connect Cys46-Cys76 and Cys79-Cys138. N-linked (GlcNAc...) asparagine glycosylation is present at Asn87. The tract at residues 247-276 is disordered; that stretch reads YKPQTFNSQQTSNNQNSNTQTPTKQPSPNS. The span at 249–272 shows a compositional bias: low complexity; sequence PQTFNSQQTSNNQNSNTQTPTKQP. The helical transmembrane segment at 315–335 threads the bilayer; sequence SLKLLPNFLLLILIILLNINF.

It belongs to the expansin family. Expansin A subfamily.

The protein localises to the membrane. Functionally, may serve to lubricate the movement of the cellulose microfibrils during cell growth and wall extension and/or may serve to maintain the fluid state of the slug cell wall. The polypeptide is Expansin-like protein 3 (expl3) (Dictyostelium discoideum (Social amoeba)).